Reading from the N-terminus, the 307-residue chain is MNHSVVTEFIILGLTKKPELQGIIFLFFLIVYLVAFLGNMLIIIAKIYNNTLHTPMYVFLLTLAVVDIICTTSIIPKMLGTMLTSENTISYAGCMSQLFLFTWSLGAEMVLFTTMAYDRYVAICFPLHYSTIMNHHMCVALLSMVMAIAVTNSWVHTALIMRLTFCGPNTIDHFFCEIPPLLALSCSPVRINEVMVYVADITLAIGDFILTCISYGFIIVAILRIRTVEGKRKAFSTCSSHLTVVTLYYSPVIYTYIRPASSYTFERDKVVAALYTLVTPTLNPMVYSFQNREMQAGIRKVFAFLKH.

At 1–22 (MNHSVVTEFIILGLTKKPELQG) the chain is on the extracellular side. A glycan (N-linked (GlcNAc...) asparagine) is linked at Asn-2. Residues 23–43 (IIFLFFLIVYLVAFLGNMLII) form a helical membrane-spanning segment. Residues 44 to 51 (IAKIYNNT) lie on the Cytoplasmic side of the membrane. The chain crosses the membrane as a helical span at residues 52–72 (LHTPMYVFLLTLAVVDIICTT). Residues 73–96 (SIIPKMLGTMLTSENTISYAGCMS) are Extracellular-facing. The cysteines at positions 94 and 186 are disulfide-linked. Residues 97–117 (QLFLFTWSLGAEMVLFTTMAY) form a helical membrane-spanning segment. Topologically, residues 118-136 (DRYVAICFPLHYSTIMNHH) are cytoplasmic. Residues 137-157 (MCVALLSMVMAIAVTNSWVHT) form a helical membrane-spanning segment. Residues 158–194 (ALIMRLTFCGPNTIDHFFCEIPPLLALSCSPVRINEV) are Extracellular-facing. Residues 195–214 (MVYVADITLAIGDFILTCIS) traverse the membrane as a helical segment. Topologically, residues 215-234 (YGFIIVAILRIRTVEGKRKA) are cytoplasmic. A helical membrane pass occupies residues 235 to 255 (FSTCSSHLTVVTLYYSPVIYT). Over 256–268 (YIRPASSYTFERD) the chain is Extracellular. Residues 269–289 (KVVAALYTLVTPTLNPMVYSF) form a helical membrane-spanning segment. Residues 290 to 307 (QNREMQAGIRKVFAFLKH) lie on the Cytoplasmic side of the membrane.

The protein belongs to the G-protein coupled receptor 1 family.

The protein localises to the cell membrane. Its function is as follows. Odorant receptor. In Homo sapiens (Human), this protein is Olfactory receptor 13G1 (OR13G1).